The following is a 237-amino-acid chain: Phosphoribosylaminoimidazole-succinocarboxamide synthase (237 aa).

The protein belongs to the SAICAR synthetase family.

It carries out the reaction 5-amino-1-(5-phospho-D-ribosyl)imidazole-4-carboxylate + L-aspartate + ATP = (2S)-2-[5-amino-1-(5-phospho-beta-D-ribosyl)imidazole-4-carboxamido]succinate + ADP + phosphate + 2 H(+). Its pathway is purine metabolism; IMP biosynthesis via de novo pathway; 5-amino-1-(5-phospho-D-ribosyl)imidazole-4-carboxamide from 5-amino-1-(5-phospho-D-ribosyl)imidazole-4-carboxylate: step 1/2. The polypeptide is Phosphoribosylaminoimidazole-succinocarboxamide synthase (Methanosarcina acetivorans (strain ATCC 35395 / DSM 2834 / JCM 12185 / C2A)).